Here is a 239-residue protein sequence, read N- to C-terminus: 4-hydroxy-tetrahydrodipicolinate reductase (239 aa).

Residues 12–17 (GASGRM), 94–96 (GTT), and 118–121 (ASNF) contribute to the NAD(+) site. Catalysis depends on H150, which acts as the Proton donor/acceptor. H151 contributes to the (S)-2,3,4,5-tetrahydrodipicolinate binding site. The active-site Proton donor is K154. Residue 160 to 161 (GT) coordinates (S)-2,3,4,5-tetrahydrodipicolinate.

It belongs to the DapB family.

Its subcellular location is the cytoplasm. The enzyme catalyses (S)-2,3,4,5-tetrahydrodipicolinate + NAD(+) + H2O = (2S,4S)-4-hydroxy-2,3,4,5-tetrahydrodipicolinate + NADH + H(+). The catalysed reaction is (S)-2,3,4,5-tetrahydrodipicolinate + NADP(+) + H2O = (2S,4S)-4-hydroxy-2,3,4,5-tetrahydrodipicolinate + NADPH + H(+). Its pathway is amino-acid biosynthesis; L-lysine biosynthesis via DAP pathway; (S)-tetrahydrodipicolinate from L-aspartate: step 4/4. Functionally, catalyzes the conversion of 4-hydroxy-tetrahydrodipicolinate (HTPA) to tetrahydrodipicolinate. The chain is 4-hydroxy-tetrahydrodipicolinate reductase from Stenotrophomonas maltophilia (strain K279a).